A 915-amino-acid chain; its full sequence is Protein translocase subunit SecA (915 aa).

ATP-binding positions include Gln-87, 105–109, and Asp-516; that span reads GEGKT. Residues 866 to 915 are disordered; it reads MTYGAPSDGDIGGSVEDEPLELPEGARVGRNDPCPCGSGKKYKQCHGKLS. Positions 899, 901, 910, and 911 each coordinate Zn(2+). Residues 905–915 show a composition bias toward basic residues; the sequence is KKYKQCHGKLS.

The protein belongs to the SecA family. As to quaternary structure, monomer and homodimer. Part of the essential Sec protein translocation apparatus which comprises SecA, SecYEG and auxiliary proteins SecDF-YajC and YidC. The cofactor is Zn(2+).

The protein localises to the cell inner membrane. The protein resides in the cytoplasm. The catalysed reaction is ATP + H2O + cellular proteinSide 1 = ADP + phosphate + cellular proteinSide 2.. Part of the Sec protein translocase complex. Interacts with the SecYEG preprotein conducting channel. Has a central role in coupling the hydrolysis of ATP to the transfer of proteins into and across the cell membrane, serving both as a receptor for the preprotein-SecB complex and as an ATP-driven molecular motor driving the stepwise translocation of polypeptide chains across the membrane. The sequence is that of Protein translocase subunit SecA from Delftia acidovorans (strain DSM 14801 / SPH-1).